Here is a 318-residue protein sequence, read N- to C-terminus: Electron transfer flavoprotein subunit alpha (318 aa).

Position 257–285 (257–285 (LYIALGISGAIQHRAGMQTSKTIVAVNKD)) interacts with FAD.

The protein belongs to the ETF alpha-subunit/FixB family. As to quaternary structure, heterodimer of an alpha and a beta subunit. The cofactor is FAD.

In terms of biological role, the electron transfer flavoprotein serves as a specific electron acceptor for other dehydrogenases. It transfers the electrons to the main respiratory chain via ETF-ubiquinone oxidoreductase (ETF dehydrogenase). The polypeptide is Electron transfer flavoprotein subunit alpha (etfA) (Mycobacterium leprae (strain TN)).